A 433-amino-acid polypeptide reads, in one-letter code: Adenylosuccinate synthetase (433 aa).

Residues 11–17 and 39–41 each bind GTP; these read GDEGKGK and GHT. Asp12 (proton acceptor) is an active-site residue. Mg(2+)-binding residues include Asp12 and Gly39. IMP-binding positions include 12–15, 37–40, Thr134, Arg148, Asn230, Thr245, and Arg309; these read DEGK and NAGH. The Proton donor role is filled by His40. 305 to 311 lines the substrate pocket; sequence VTTGRKR. Residues Arg311, 337–339, and 419–421 contribute to the GTP site; these read KLD and GTG.

It belongs to the adenylosuccinate synthetase family. Homodimer. Mg(2+) serves as cofactor.

It localises to the cytoplasm. It catalyses the reaction IMP + L-aspartate + GTP = N(6)-(1,2-dicarboxyethyl)-AMP + GDP + phosphate + 2 H(+). It participates in purine metabolism; AMP biosynthesis via de novo pathway; AMP from IMP: step 1/2. Functionally, plays an important role in the de novo pathway and in the salvage pathway of purine nucleotide biosynthesis. Catalyzes the first committed step in the biosynthesis of AMP from IMP. The polypeptide is Adenylosuccinate synthetase (Saccharomyces cerevisiae (strain Lalvin EC1118 / Prise de mousse) (Baker's yeast)).